We begin with the raw amino-acid sequence, 234 residues long: UPF0502 protein Bphy_5360 (234 aa).

It belongs to the UPF0502 family.

This is UPF0502 protein Bphy_5360 from Paraburkholderia phymatum (strain DSM 17167 / CIP 108236 / LMG 21445 / STM815) (Burkholderia phymatum).